A 340-amino-acid chain; its full sequence is Peroxisomal adenine nucleotide transporter 1 (340 aa).

3 Solcar repeats span residues 4–119 (ENAV…VRKH), 133–218 (FSTP…LREA), and 236–320 (LSPG…LTKM). Helical transmembrane passes span 6 to 26 (AVIG…LDLA), 96 to 116 (GSST…YTLV), 139 to 159 (LVLG…INVV), 190 to 210 (GFWA…ITYA), 242 to 262 (FVMG…LIIA), and 293 to 313 (WKGL…LFMF).

The protein belongs to the mitochondrial carrier (TC 2.A.29) family.

Its subcellular location is the peroxisome membrane. Functionally, adenine nucleotide transporter involved in the uniport of ATP and adenine nucleotide hetero-exchange transport between the cytosol and the peroxisomal lumen. This transport is accompanied by a proton transport from the peroxisomal lumen to the cytosol. Transport of ATP into the peroxisome is required for beta-oxidation of medium-chain fatty acids. In Eremothecium gossypii (strain ATCC 10895 / CBS 109.51 / FGSC 9923 / NRRL Y-1056) (Yeast), this protein is Peroxisomal adenine nucleotide transporter 1 (ANT1).